The primary structure comprises 69 residues: DNA-directed RNA polymerase subunit epsilon (69 aa).

The protein belongs to the RNA polymerase subunit epsilon family. RNAP is composed of a core of 2 alpha, a beta and a beta' subunit. The core is associated with a delta subunit, and at least one of epsilon or omega. When a sigma factor is associated with the core the holoenzyme is formed, which can initiate transcription.

It catalyses the reaction RNA(n) + a ribonucleoside 5'-triphosphate = RNA(n+1) + diphosphate. Its function is as follows. A non-essential component of RNA polymerase (RNAP). This chain is DNA-directed RNA polymerase subunit epsilon, found in Listeria welshimeri serovar 6b (strain ATCC 35897 / DSM 20650 / CCUG 15529 / CIP 8149 / NCTC 11857 / SLCC 5334 / V8).